Consider the following 308-residue polypeptide: D-alanine--D-alanine ligase (308 aa).

The region spanning 103–302 (KTVMATAGVP…FDELVQWMVE (200 aa)) is the ATP-grasp domain. 130–184 (MAPPYVIKPVADGSSVGVFMVTEAHEHPPQELFRDDWPHGEQLLVEKYVAGKELT) is an ATP binding site. Mg(2+) is bound by residues D252, E269, and N271.

It belongs to the D-alanine--D-alanine ligase family. Mg(2+) is required as a cofactor. The cofactor is Mn(2+).

It is found in the cytoplasm. The enzyme catalyses 2 D-alanine + ATP = D-alanyl-D-alanine + ADP + phosphate + H(+). The protein operates within cell wall biogenesis; peptidoglycan biosynthesis. Its function is as follows. Cell wall formation. The protein is D-alanine--D-alanine ligase of Rhodopseudomonas palustris (strain BisB18).